We begin with the raw amino-acid sequence, 358 residues long: Ubiquitin thioesterase OTU1 (358 aa).

Residues 5-87 form the Ubiquitin-like domain; that stretch reads FSVKLKSKKG…LIVEEKAGAA (83 aa). The UBX-like stretch occupies residues 8–94; the sequence is KLKSKKGQFI…GAAGPTSTPL (87 aa). The segment at 83-108 is disordered; that stretch reads KAGAAGPTSTPLASGSGSSTMEDDEA. Over residues 89–102 the composition is skewed to polar residues; sequence PTSTPLASGSGSST. The OTU domain maps to 161–285; the sequence is LLKKVVPADN…GIHYDPLYME (125 aa). The interval 166 to 172 is cys-loop; that stretch reads VPADNSC. The active site involves D169. Catalysis depends on C172, which acts as the Nucleophile. Residues 224–234 are variable-loop; sequence IQKADSWGGAI. The segment at 274-278 is his-loop; sequence FDGIH. I277 lines the substrate pocket. H278 is an active-site residue. The segment at 301–306 is S2 site; that stretch reads MGVYQQ. A C2H2-type zinc finger spans residues 328-352; the sequence is LRCMDCDVMLVGQGQAQEHAKKTGH. H352 is an active-site residue.

It catalyses the reaction Thiol-dependent hydrolysis of ester, thioester, amide, peptide and isopeptide bonds formed by the C-terminal Gly of ubiquitin (a 76-residue protein attached to proteins as an intracellular targeting signal).. Functionally, hydrolase that can remove conjugated ubiquitin from proteins and may therefore play an important regulatory role at the level of protein turnover by preventing degradation. The chain is Ubiquitin thioesterase OTU1 from Drosophila pseudoobscura pseudoobscura (Fruit fly).